Here is a 2595-residue protein sequence, read N- to C-terminus: Glucosylceramide transporter ABCA12 (2595 aa).

Residues 23–43 traverse the membrane as a helical segment; it reads PLWTLVLILWPVIIFIILAIT. Residues asparagine 156, asparagine 174, asparagine 214, asparagine 275, asparagine 333, asparagine 367, asparagine 383, asparagine 412, asparagine 435, asparagine 528, asparagine 543, asparagine 577, asparagine 608, asparagine 623, asparagine 648, asparagine 752, asparagine 826, asparagine 920, and asparagine 963 are each glycosylated (N-linked (GlcNAc...) asparagine). 3 helical membrane-spanning segments follow: residues 1065 to 1085, 1112 to 1132, and 1145 to 1165; these read VSYSLPIVLMVAWVVFIAAFV, FAWLIESVGFLLVTIVILIII, and FILFLYFSDYSFSVIAMSYLI. N-linked (GlcNAc...) asparagine glycosylation occurs at asparagine 1170. The next 3 membrane-spanning stretches (helical) occupy residues 1174–1194, 1200–1220, and 1250–1270; these read IAALIGSLIYIIAFFPFIVLV, LSYVLKVFMSLLSPTAFSYAS, and FGWLCCLILADSFIYFLIAWY. In terms of domain architecture, ABC transporter 1 spans 1346–1577; it reads VALHGVTKIY…FGDGYHLTLT (232 aa). ATP is bound at residue 1378-1385; it reads GPNGAGKT. N-linked (GlcNAc...) asparagine glycosylation is found at asparagine 1524, asparagine 1663, and asparagine 1704. Residues 1747 to 1767 traverse the membrane as a helical segment; it reads LIAQVILPIVFVTTAMGLGTL. 6 N-linked (GlcNAc...) asparagine glycosylation sites follow: asparagine 1769, asparagine 1819, asparagine 1835, asparagine 1876, asparagine 1921, and asparagine 1952. 4 consecutive transmembrane segments (helical) span residues 1979–1999, 2035–2055, 2072–2092, and 2103–2123; these read ATISSLIDILVALSILMGYSV, FIYDMVFYLVPVAFSIGIIAI, LLLLLFGYATFSWMYLLAGLF, and VCVNLFFGINSIVSLSVVYFL. A glycan (N-linked (GlcNAc...) asparagine) is linked at asparagine 2178. The helical transmembrane segment at 2187–2207 threads the bilayer; that stretch reads GAMFVALVSQGTMFFSLRLLI. 2 N-linked (GlcNAc...) asparagine glycosylation sites follow: asparagine 2208 and asparagine 2223. One can recognise an ABC transporter 2 domain in the interval 2254-2489; sequence VQLYCLTKTY…FGRGFTVKVH (236 aa). A helical transmembrane segment spans residues 2270–2290; sequence IIAVNNISIGIPAGECFGLLG. 2290–2297 contributes to the ATP binding site; that stretch reads GVNGAGKT. N-linked (GlcNAc...) asparagine glycosylation is found at asparagine 2318, asparagine 2542, and asparagine 2547. The disordered stretch occupies residues 2571–2595; that stretch reads SYETADTSSQGSTISVDSQDDQMES. The span at 2574-2587 shows a compositional bias: polar residues; that stretch reads TADTSSQGSTISVD.

It belongs to the ABC transporter superfamily. ABCA family. Interacts with NR1H2 and ABCA1; this interaction is required for ABCA1 localization to the cell surface and is necessary for its normal activity and stability. As to expression, mainly expressed in the stomach, placenta, testis and fetal brain. Expressed in the upper epidermal layers, mainly the granular layers, of skin. Expressed throughout the normal interfollicular epidermis with prominent expression in the stratum granulosum. Expressed in alpha and beta cells of pancreatic islets.

Its subcellular location is the cytoplasmic vesicle. The protein resides in the secretory vesicle membrane. It is found in the golgi apparatus membrane. The catalysed reaction is ATP + H2O + phospholipidSide 1 = ADP + phosphate + phospholipidSide 2.. The enzyme catalyses a beta-D-glucosylceramide(in) + ATP + H2O = a beta-D-glucosylceramide(out) + ADP + phosphate + H(+). Transports lipids such as glucosylceramides from the outer to the inner leaflet of lamellar granules (LGs) membrane, whereby the lipids are finally transported to the keratinocyte periphery via the trans-Golgi network and LGs and released to the apical surface of the granular keratinocytes to form lipid lamellae in the stratum corneum of the epidermis, which is essential for skin barrier function. In the meantime, participates in the transport of the lamellar granules-associated proteolytic enzymes, in turn regulates desquamation and keratinocyte differentiation. Furthermore, is essential for the regulation of cellular cholesterol homeostasis by regulating ABCA1-dependent cholesterol efflux from macrophages through interaction with NR1H2 and ABCA1. Plays pleiotropic roles in regulating glucose stimulated insulin secretion from beta cells, regulating the morphology and fusion of insulin granules, lipid raft abundance and the actin cytoskeleton. Also involved in lung surfactant biogenesis. The polypeptide is Glucosylceramide transporter ABCA12 (Homo sapiens (Human)).